The primary structure comprises 410 residues: UDP-N-acetylglucosamine--dolichyl-phosphate N-acetylglucosaminephosphotransferase (410 aa).

The Lumenal segment spans residues 1-10 (MWAFPELPLP). The helical transmembrane segment at 11-40 (LPLLVNLIGSLLGFVATVTLIPAFRSHFIA) threads the bilayer. The Cytoplasmic portion of the chain corresponds to 41-60 (ARLCGQDLNKLSQQQIPESQ). UDP-N-acetyl-alpha-D-glucosamine is bound by residues 46–48 (QDL) and Glu58. A helical transmembrane segment spans residues 61–80 (GVISGAVFLIILFCFIPFPF). The Lumenal portion of the chain corresponds to 81-93 (LNCFVEEQCKAFP). Residues 94–120 (HHEFVALIGALLAICCMIFLGFADDVL) traverse the membrane as a helical segment. The Cytoplasmic portion of the chain corresponds to 121 to 123 (NLR). A helical transmembrane segment spans residues 124-145 (WRHKLLLPTAASLPLLMVYFTN). Position 127 (Lys127) interacts with dolichyl phosphate. Over 146–168 (FGNTTIVVPKPFRWILGLHLDLG) the chain is Lumenal. Residue Asn148 is glycosylated (N-linked (GlcNAc...) asparagine). A helical membrane pass occupies residues 169–188 (ILYYVYMGLLAVFCTNAINI). A dolichyl phosphate-binding site is contributed by 180–188 (VFCTNAINI). Position 187 (Asn187) interacts with Mg(2+). Residues 189 to 194 (LAGING) lie on the Cytoplasmic side of the membrane. Position 193 (Asn193) interacts with UDP-N-acetyl-alpha-D-glucosamine. A helical membrane pass occupies residues 195-215 (LEAGQSLVISASIIVFNLVEL). At 216-220 (EGDYR) the chain is on the lumenal side. The chain crosses the membrane as a helical span at residues 221 to 244 (DDHIFSLYFMIPFFFTTLGLLYHN). The Cytoplasmic segment spans residues 245–252 (WYPSRVFV). The helical transmembrane segment at 253 to 271 (GDTFCYFAGMTFAVVGILG) threads the bilayer. A Mg(2+)-binding site is contributed by Asp254. At 272-273 (HF) the chain is on the lumenal side. Residues 274–295 (SKTMLLFFMPQVFNFLYSLPQL) form a helical membrane-spanning segment. The Cytoplasmic portion of the chain corresponds to 296–377 (FHIIPCPRHR…LLLKVFGPIH (82 aa)). Residue 303 to 305 (RHR) coordinates UDP-N-acetyl-alpha-D-glucosamine. The chain crosses the membrane as a helical span at residues 378–402 (ERNLTLLLLLLQVLSSAATFSIRYQ). Residues 403–410 (LVRLFYDV) are Lumenal-facing.

This sequence belongs to the glycosyltransferase 4 family. As to quaternary structure, homodimer. The cofactor is Mg(2+).

Its subcellular location is the endoplasmic reticulum membrane. The catalysed reaction is a di-trans,poly-cis-dolichyl phosphate + UDP-N-acetyl-alpha-D-glucosamine = an N-acetyl-alpha-D-glucosaminyl-diphospho-di-trans,poly-cis-dolichol + UMP. It participates in protein modification; protein glycosylation. With respect to regulation, inhibited by natural nucleoside antibiotic tunicamycin, which acts as a structural analog and competitor of UDP-GlcNAc. In terms of biological role, UDP-N-acetylglucosamine--dolichyl-phosphate N-acetylglucosaminephosphotransferase that operates in the biosynthetic pathway of dolichol-linked oligosaccharides, the glycan precursors employed in protein asparagine (N)-glycosylation. The assembly of dolichol-linked oligosaccharides begins on the cytosolic side of the endoplasmic reticulum membrane and finishes in its lumen. The sequential addition of sugars to dolichol pyrophosphate produces dolichol-linked oligosaccharides containing fourteen sugars, including two GlcNAcs, nine mannoses and three glucoses. Once assembled, the oligosaccharide is transferred from the lipid to nascent proteins by oligosaccharyltransferases. Catalyzes the initial step of dolichol-linked oligosaccharide biosynthesis, transfering GlcNAc-1-P from cytosolic UDP-GlcNAc onto the carrier lipid dolichyl phosphate (P-dolichol), yielding GlcNAc-P-P-dolichol embedded in the cytoplasmic leaflet of the endoplasmic reticulum membrane. The sequence is that of UDP-N-acetylglucosamine--dolichyl-phosphate N-acetylglucosaminephosphotransferase from Mus musculus (Mouse).